The chain runs to 386 residues: 8-amino-7-oxononanoate synthase (386 aa).

Residue R20 participates in substrate binding. Residue G107–Y108 coordinates pyridoxal 5'-phosphate. H132 contributes to the substrate binding site. Positions 178, 206, and 234 each coordinate pyridoxal 5'-phosphate. An N6-(pyridoxal phosphate)lysine modification is found at K237. Residue T351 coordinates substrate.

It belongs to the class-II pyridoxal-phosphate-dependent aminotransferase family. BioF subfamily. As to quaternary structure, homodimer. Pyridoxal 5'-phosphate serves as cofactor.

It carries out the reaction 6-carboxyhexanoyl-[ACP] + L-alanine + H(+) = (8S)-8-amino-7-oxononanoate + holo-[ACP] + CO2. It functions in the pathway cofactor biosynthesis; biotin biosynthesis. Functionally, catalyzes the decarboxylative condensation of pimeloyl-[acyl-carrier protein] and L-alanine to produce 8-amino-7-oxononanoate (AON), [acyl-carrier protein], and carbon dioxide. The protein is 8-amino-7-oxononanoate synthase of Aromatoleum aromaticum (strain DSM 19018 / LMG 30748 / EbN1) (Azoarcus sp. (strain EbN1)).